The primary structure comprises 348 residues: Enkurin domain-containing protein 1 (348 aa).

3 disordered regions span residues 1–65 (MCEG…RPGG), 84–195 (GGIS…PSAK), and 262–282 (AEARQHSQPDPAMPPGHTRMP). Ser-93 carries the post-translational modification Phosphoserine. Basic and acidic residues predominate over residues 95–127 (KRKDPKDHEKENMRRIREIQRRFREQEHSREQG). Ser-138 is subject to Phosphoserine. Residues 139 to 148 (PKYDKVESRV) are compositionally biased toward basic and acidic residues. The 93-residue stretch at 253-345 (ERRDLWRREA…IFSRPKVFVK (93 aa)) folds into the Enkurin domain.

In terms of assembly, interacts with alpha-tubulin. Interacts (via central region) with CCP110 (via N-terminal region); competes with CEP97 for binding to CCP110.

Its subcellular location is the cytoplasm. The protein localises to the cytoskeleton. The protein resides in the microtubule organizing center. It is found in the centrosome. It localises to the centriole. Its subcellular location is the cilium basal body. The protein localises to the cell projection. The protein resides in the cilium. It is found in the spindle. It localises to the spindle pole. Its subcellular location is the cilium axoneme. Functionally, microtubule-binding protein which regulates microtubule organization and stability. Promotes the stability of astral microtubules and facilitates the proper orientation of the mitotic spindle. This allows the oriented division of basal keratinocytes and contributes to epidermal stratification. Required for the assembly of both primary and motile cilia. Destabilizes the interaction between CCP110 and CEP97 by competing with CEP97 for binding to CCP110 which promotes the removal of CCP110 and CEP97 from the mother centriole and allows the initiation of ciliogenesis. In Bos taurus (Bovine), this protein is Enkurin domain-containing protein 1 (ENKD1).